A 95-amino-acid chain; its full sequence is Aspartyl/glutamyl-tRNA(Asn/Gln) amidotransferase subunit C (95 aa).

The protein belongs to the GatC family. In terms of assembly, heterotrimer of A, B and C subunits.

It carries out the reaction L-glutamyl-tRNA(Gln) + L-glutamine + ATP + H2O = L-glutaminyl-tRNA(Gln) + L-glutamate + ADP + phosphate + H(+). It catalyses the reaction L-aspartyl-tRNA(Asn) + L-glutamine + ATP + H2O = L-asparaginyl-tRNA(Asn) + L-glutamate + ADP + phosphate + 2 H(+). Functionally, allows the formation of correctly charged Asn-tRNA(Asn) or Gln-tRNA(Gln) through the transamidation of misacylated Asp-tRNA(Asn) or Glu-tRNA(Gln) in organisms which lack either or both of asparaginyl-tRNA or glutaminyl-tRNA synthetases. The reaction takes place in the presence of glutamine and ATP through an activated phospho-Asp-tRNA(Asn) or phospho-Glu-tRNA(Gln). This Halorhodospira halophila (strain DSM 244 / SL1) (Ectothiorhodospira halophila (strain DSM 244 / SL1)) protein is Aspartyl/glutamyl-tRNA(Asn/Gln) amidotransferase subunit C.